The sequence spans 419 residues: GTPase Obg (419 aa).

The Obg domain occupies Met1–Ile156. An OBG-type G domain is found at Ala157–Glu325. GTP is bound by residues Gly163 to Ser170, Phe188 to Ala192, Asp209 to Gly212, Asn279 to Asp282, and Ser306 to Ala308. Ser170 and Thr190 together coordinate Mg(2+). The OCT domain maps to Lys342–Lys419.

Belongs to the TRAFAC class OBG-HflX-like GTPase superfamily. OBG GTPase family. Monomer. Mg(2+) is required as a cofactor.

It localises to the cytoplasm. In terms of biological role, an essential GTPase which binds GTP, GDP and possibly (p)ppGpp with moderate affinity, with high nucleotide exchange rates and a fairly low GTP hydrolysis rate. Plays a role in control of the cell cycle, stress response, ribosome biogenesis and in those bacteria that undergo differentiation, in morphogenesis control. The polypeptide is GTPase Obg (Endomicrobium trichonymphae).